A 1011-amino-acid chain; its full sequence is MRKLLSFGRRLGQALLSSMDQEYAGRGYHIRDWELRKIHRAAIKGDAAEVEHCLTRRFRDLDVRDRKDRTVLHLACAHGRVQVVTLLLDRKCQINICDRLNRTPLMKAVHCQEEACAIILLKRGANPNIKDIYGNTALHYAVYNEGTSLAERLLSHHANIEALNKEGNTPLLFAINSRRQHMVEFLLKNQANIHAVDNFKRTALILAVQHNLSSIVTLLLQQNIHISSQDMFGQTAEDYAFCCDLRSIQQQILEHKNKMLKNHLRNDNQETAAMKPENLKKRKKRKKLKKRKEGAKAEHNLKVASEEKQERLERSENKQPQDSQSYGKKKDEMFGNFMLKRDIAMLKEELYAIKNDSLRKEKKYIQEIKSITEINANFEKSVRLNEEMITKKVAQYSQQLNDLKAENARLNSKLEKEKHNKERLEAEVESLHSNLATAINEYNEILERKDLELVLWRADDVSRHETMGSNISQLTDKNELLTEQVHKARVKFNTLKGKLRETRDALREKTLALESVQLDLKQAQHRIKEMKQMHPNGEAKESQSIGKQNSSEERIRQRELENLLLERQLEDARKEGDNKEIVINIHRDCLENGKEDLLEERNKELMNEYNYLKEKLLQYEKEKAEREVIVREFQEELVDHLKKFSMSESPLEGTSHCHINLDETWTSKKKLFQVEIQPEEKHEEFRKVFELISLLNYTADQIRKKNRELEEEATGYKKCLEMTINMLNAFANEDFSCHGDLNTDQLKMDILFKKLKQKFDDLMAEKEAVSSKCVNLAKDNEVLHQELLSMGKVQEKCEKLEKDKKMLEEKVLNLKTHMEKDMVELGKVQEYKSELDERAMQAIEKLEEIHLQKQAEYEKQLEQLNKDNTASLKKKELTLKDVECKFSKMKTAYEDVTTELEEYKEAFAVALKANSSMSEKITKSDKKIAVISTKLFMEKERMEYFLSTLPMRPDPELPCVENLNSIELNRKYIPKMAIRIPTSNPQTSNNCKNSLTELLLRWALAPIYFLL.

ANK repeat units lie at residues 67–96 (KDRTVLHLACAHGRVQVVTLLLDRKCQINI), 100–129 (LNRTPLMKAVHCQEEACAIILLKRGANPNI), 133–162 (YGNTALHYAVYNEGTSLAERLLSHHANIEA), 166–195 (EGNTPLLFAINSRRQHMVEFLLKNQANIHA), and 199–228 (FKRTALILAVQHNLSSIVTLLLQQNIHISS). 2 disordered regions span residues 264–330 (LRND…GKKK) and 533–554 (MHPNGEAKESQSIGKQNSSEER). 4 coiled-coil regions span residues 277-319 (ENLK…ENKQ), 385-639 (NEEM…ELVD), 692-722 (ISLLNYTADQIRKKNRELEEEATGYKKCLEM), and 752-908 (FKKL…EAFA). A compositionally biased stretch (basic residues) spans 280-293 (KKRKKRKKLKKRKE). The span at 294–319 (GAKAEHNLKVASEEKQERLERSENKQ) shows a compositional bias: basic and acidic residues.

The polypeptide is Ankyrin repeat domain-containing protein 18B (ANKRD18B) (Homo sapiens (Human)).